The primary structure comprises 253 residues: Phycoerythrobilin:ferredoxin oxidoreductase (253 aa).

It belongs to the HY2 family.

The enzyme catalyses (3Z)-phycoerythrobilin + oxidized 2[4Fe-4S]-[ferredoxin] = 15,16-dihydrobiliverdin + reduced 2[4Fe-4S]-[ferredoxin] + 2 H(+). In terms of biological role, catalyzes the two-electron reduction of the C2 and C3(1) diene system of 15,16-dihydrobiliverdin. This is Phycoerythrobilin:ferredoxin oxidoreductase from Prochlorococcus marinus (strain MIT 9301).